The primary structure comprises 65 residues: Small ribosomal subunit protein bS21 (65 aa).

Over residues 46–57 the composition is skewed to basic residues; that stretch reads RLKRSRSKRRAQ. The segment at 46–65 is disordered; that stretch reads RLKRSRSKRRAQRANEERNS.

The protein belongs to the bacterial ribosomal protein bS21 family.

This chain is Small ribosomal subunit protein bS21, found in Chlorobaculum tepidum (strain ATCC 49652 / DSM 12025 / NBRC 103806 / TLS) (Chlorobium tepidum).